The primary structure comprises 159 residues: RNA pyrophosphohydrolase (159 aa).

Positions 6-149 constitute a Nudix hydrolase domain; it reads GFRPNVGIIL…KREVYRRALK (144 aa). A Nudix box motif is present at residues 38-59; the sequence is GGINPQETPEDALYRELNEEVG.

The protein belongs to the Nudix hydrolase family. RppH subfamily. Requires a divalent metal cation as cofactor.

Accelerates the degradation of transcripts by removing pyrophosphate from the 5'-end of triphosphorylated RNA, leading to a more labile monophosphorylated state that can stimulate subsequent ribonuclease cleavage. In Pseudomonas savastanoi pv. phaseolicola (strain 1448A / Race 6) (Pseudomonas syringae pv. phaseolicola (strain 1448A / Race 6)), this protein is RNA pyrophosphohydrolase.